Reading from the N-terminus, the 406-residue chain is MSADPFVIVGAGHAARRTAEALRARDADAPIVMIGAERELPYDRPALSKDALLNDDGEQRAFVRDAAWYDAQRIALRLGTRVDAIEREAQRVRLDDGTTLPYAKLVLATGSRVRTFGGPIDAGVVAHYVRTVADARALRAQLVRGRRVAVLGGGFIGLEVAAAARQLGCNVTVIDPAARLLQRALPEVVGAYAHRLHDERGVGFQMATLPRAIRAAAGGGAIVETDRGDVHADVVVVGIGVLPNVELAQAAGLDVDNGIRVDAGCRTADRAIFAAGEVTMHFNPLLGRHVRIESWQVAENQPAVAAANLLGADDAYAELPWLWSDQYDCNLQMLGLFGAGQTTVVRGDPARGPFTVFGLGGDGRIVAAAAVNLGRDIGAARRLIAAGAMPDPQQLADPTVGLKTFL.

5-37 (PFVIVGAGHAARRTAEALRARDADAPIVMIGAE) provides a ligand contact to FAD. 152–161 (GGGFIGLEVA) contacts NAD(+).

This sequence belongs to the FAD-dependent oxidoreductase family. In terms of assembly, part of a multicomponent enzyme system composed of a reductase (AndAa), a ferredoxin (AndAb) and a two-subunit oxygenase component (AndAc and AndAd). The cofactor is FAD.

The enzyme catalyses 2 reduced [2Fe-2S]-[ferredoxin] + NAD(+) + H(+) = 2 oxidized [2Fe-2S]-[ferredoxin] + NADH. Its pathway is aromatic compound metabolism; anthranilate degradation via hydroxylation; catechol from anthranilate: step 1/1. Functionally, part of the multicomponent anthranilate dioxygenase, that converts anthranilate to catechol. Probably transfers electrons from ferredoxin (AndAb) to NADH. This Burkholderia cepacia (Pseudomonas cepacia) protein is Anthranilate 1,2-dioxygenase system ferredoxin--NAD(+) reductase component.